The chain runs to 156 residues: ATP synthase subunit b (156 aa).

Residues 4–26 form a helical membrane-spanning segment; it reads GATFWGPMISFALFVWFTMKFVW.

It belongs to the ATPase B chain family. As to quaternary structure, F-type ATPases have 2 components, F(1) - the catalytic core - and F(0) - the membrane proton channel. F(1) has five subunits: alpha(3), beta(3), gamma(1), delta(1), epsilon(1). F(0) has three main subunits: a(1), b(2) and c(10-14). The alpha and beta chains form an alternating ring which encloses part of the gamma chain. F(1) is attached to F(0) by a central stalk formed by the gamma and epsilon chains, while a peripheral stalk is formed by the delta and b chains.

It localises to the cell inner membrane. F(1)F(0) ATP synthase produces ATP from ADP in the presence of a proton or sodium gradient. F-type ATPases consist of two structural domains, F(1) containing the extramembraneous catalytic core and F(0) containing the membrane proton channel, linked together by a central stalk and a peripheral stalk. During catalysis, ATP synthesis in the catalytic domain of F(1) is coupled via a rotary mechanism of the central stalk subunits to proton translocation. Its function is as follows. Component of the F(0) channel, it forms part of the peripheral stalk, linking F(1) to F(0). This chain is ATP synthase subunit b, found in Halorhodospira halophila (strain DSM 244 / SL1) (Ectothiorhodospira halophila (strain DSM 244 / SL1)).